The sequence spans 642 residues: Chaperone protein DnaK (642 aa).

Thr-200 is subject to Phosphothreonine; by autocatalysis. Residues 600 to 616 (EAAQQSAGAAGPMPGAP) are compositionally biased toward low complexity. The segment at 600-642 (EAAQQSAGAAGPMPGAPAEEEPSDGPRKAKGRVVDAEIVDDDK) is disordered. Over residues 623-634 (DGPRKAKGRVVD) the composition is skewed to basic and acidic residues.

Belongs to the heat shock protein 70 family.

In terms of biological role, acts as a chaperone. This is Chaperone protein DnaK from Akkermansia muciniphila (strain ATCC BAA-835 / DSM 22959 / JCM 33894 / BCRC 81048 / CCUG 64013 / CIP 107961 / Muc).